The sequence spans 269 residues: Glutamate racemase (269 aa).

Substrate is bound by residues 11–12 (DS) and 43–44 (YG). Cysteine 74 acts as the Proton donor/acceptor in catalysis. 75–76 (NT) contributes to the substrate binding site. Cysteine 185 acts as the Proton donor/acceptor in catalysis. 186 to 187 (TH) is a substrate binding site.

The protein belongs to the aspartate/glutamate racemases family.

It catalyses the reaction L-glutamate = D-glutamate. It participates in cell wall biogenesis; peptidoglycan biosynthesis. Provides the (R)-glutamate required for cell wall biosynthesis. This is Glutamate racemase from Bacillus cereus (strain ATCC 10987 / NRS 248).